Here is a 327-residue protein sequence, read N- to C-terminus: Glycerol-3-phosphate dehydrogenase [NAD(P)+] (327 aa).

W11, H30, and K103 together coordinate NADPH. The sn-glycerol 3-phosphate site is built by K103, G131, and S133. A135 is a binding site for NADPH. 5 residues coordinate sn-glycerol 3-phosphate: K186, D243, S253, R254, and N255. Catalysis depends on K186, which acts as the Proton acceptor. R254 lines the NADPH pocket. Residues V281 and E283 each contribute to the NADPH site.

The protein belongs to the NAD-dependent glycerol-3-phosphate dehydrogenase family.

Its subcellular location is the cytoplasm. It catalyses the reaction sn-glycerol 3-phosphate + NAD(+) = dihydroxyacetone phosphate + NADH + H(+). The catalysed reaction is sn-glycerol 3-phosphate + NADP(+) = dihydroxyacetone phosphate + NADPH + H(+). It functions in the pathway membrane lipid metabolism; glycerophospholipid metabolism. Functionally, catalyzes the reduction of the glycolytic intermediate dihydroxyacetone phosphate (DHAP) to sn-glycerol 3-phosphate (G3P), the key precursor for phospholipid synthesis. In Wolbachia sp. subsp. Brugia malayi (strain TRS), this protein is Glycerol-3-phosphate dehydrogenase [NAD(P)+].